We begin with the raw amino-acid sequence, 274 residues long: Serine acetyltransferase (274 aa).

It belongs to the transferase hexapeptide repeat family.

It is found in the cytoplasm. It catalyses the reaction L-serine + acetyl-CoA = O-acetyl-L-serine + CoA. Its pathway is amino-acid biosynthesis; L-cysteine biosynthesis; L-cysteine from L-serine: step 1/2. In Buchnera aphidicola subsp. Acyrthosiphon pisum (strain APS) (Acyrthosiphon pisum symbiotic bacterium), this protein is Serine acetyltransferase (cysE).